A 211-amino-acid polypeptide reads, in one-letter code: Large ribosomal subunit protein uL3 (211 aa).

This sequence belongs to the universal ribosomal protein uL3 family. Part of the 50S ribosomal subunit. Forms a cluster with proteins L14 and L19.

Functionally, one of the primary rRNA binding proteins, it binds directly near the 3'-end of the 23S rRNA, where it nucleates assembly of the 50S subunit. This Trichlorobacter lovleyi (strain ATCC BAA-1151 / DSM 17278 / SZ) (Geobacter lovleyi) protein is Large ribosomal subunit protein uL3.